The primary structure comprises 1833 residues: Protein TIC 214 (1833 aa).

The next 6 membrane-spanning stretches (helical) occupy residues 18-38 (IINS…FSIG), 67-87 (FIMG…HLAL), 90-110 (PHTI…WNNH), 127-147 (LSIQ…YFIL), 175-195 (VGWL…LVWI), and 218-238 (IFSI…PSPI). Residues 254-301 (EETNLEIEKTSETKETKQEEEGFTEEDPSPSLFSEEKEDPDKIDETEK) form a disordered region. Composition is skewed to basic and acidic residues over residues 259 to 273 (EIEK…KQEE) and 292 to 301 (DPDKIDETEK).

It belongs to the TIC214 family. Part of the Tic complex.

Its subcellular location is the plastid. It localises to the chloroplast inner membrane. In terms of biological role, involved in protein precursor import into chloroplasts. May be part of an intermediate translocation complex acting as a protein-conducting channel at the inner envelope. The sequence is that of Protein TIC 214 from Spinacia oleracea (Spinach).